The chain runs to 359 residues: Guanine nucleotide-binding protein subunit alpha-11 (359 aa).

S-palmitoyl cysteine attachment occurs at residues Cys-9 and Cys-10. The G-alpha domain maps to 38 to 359 (RELKLLLLGT…QLNLKEYNLV (322 aa)). Positions 41–54 (KLLLLGTGESGKST) are G1 motif. Residues 46–53 (GTGESGKS) and 180–183 (LRVR) contribute to the GTP site. Ser-53 is a binding site for Mg(2+). The tract at residues 178–186 (DVLRVRVPT) is G2 motif. Thr-186 provides a ligand contact to Mg(2+). A G3 motif region spans residues 201 to 210 (FRMVDVGGQR). The tract at residues 270-277 (ILFLNKKD) is G4 motif. GTP contacts are provided by residues 274–277 (NKKD) and Ala-331. The tract at residues 329–334 (TCATDT) is G5 motif.

It belongs to the G-alpha family. G(q) subfamily. G proteins are composed of 3 units; alpha, beta and gamma. The alpha chain contains the guanine nucleotide binding site. Interacts with RGS22. Interacts with NTSR1.

Its subcellular location is the cell membrane. It localises to the cytoplasm. The enzyme catalyses GTP + H2O = GDP + phosphate + H(+). In terms of biological role, guanine nucleotide-binding proteins (G proteins) function as transducers downstream of G protein-coupled receptors (GPCRs) in numerous signaling cascades. The alpha chain contains the guanine nucleotide binding site and alternates between an active, GTP-bound state and an inactive, GDP-bound state. Signaling by an activated GPCR promotes GDP release and GTP binding. The alpha subunit has a low GTPase activity that converts bound GTP to GDP, thereby terminating the signal. Both GDP release and GTP hydrolysis are modulated by numerous regulatory proteins. Signaling is mediated via phospholipase C-beta-dependent inositol lipid hydrolysis for signal propagation: activates phospholipase C-beta: following GPCR activation, GNA11 activates PLC-beta (PLCB1, PLCB2, PLCB3 or PLCB4), leading to production of diacylglycerol (DAG) and inositol 1,4,5-trisphosphate (IP3). Transduces FFAR4 signaling in response to long-chain fatty acids (LCFAs). Together with GNAQ, required for heart development. In the respiratory epithelium, transmits OXGR1-dependent signals that lead to downstream intracellular Ca(2+) release and mucocilliary clearance of airborne pathogens. The sequence is that of Guanine nucleotide-binding protein subunit alpha-11 (GNA11) from Sus scrofa (Pig).